A 1110-amino-acid polypeptide reads, in one-letter code: Envelopment polyprotein (1110 aa).

Residues M1–A8 constitute a propeptide that is removed on maturation. The Lumenal segment spans residues M1–T290. The Cell attachment site motif lies at R14–D16. 2 N-linked (GlcNAc...) asparagine; by host glycosylation sites follow: N46 and N92. 2 disulfides stabilise this stretch: C90–C121 and C98–C132. Residues I153 to L171 are non-covalent dimerization. The N-linked (GlcNAc...) asparagine; by host glycan is linked to N186. An intrachain disulfide couples C200 to C261. The helical transmembrane segment at A291–Y342 threads the bilayer. Residues L343–N459 lie on the Cytoplasmic side of the membrane. Residues R460 to R1044 are Lumenal-facing. N-linked (GlcNAc...) asparagine; by host glycosylation is found at N566, N582, and N957. The helical transmembrane segment at V1045–M1065 threads the bilayer. Residues C1066–I1110 lie on the Cytoplasmic side of the membrane. Residues T1091 to I1110 form a disordered region.

This sequence belongs to the tospovirus envelope glycoprotein family. In terms of assembly, homodimer; disulfide-linked. Heterodimer with Glycoprotein C. Interacts with nucleoprotein. As to quaternary structure, heterodimer with Glycoprotein N. Interacts with nucleoprotein. Post-translationally, specific enzymatic cleavages in vivo yield mature proteins including Glycoprotein N and Glycoprotein C. In terms of processing, glycosylated with O-linked glycans. Glycosylation is essential for proper subcellular location. Cleaved at acidic pH.

The protein localises to the virion membrane. It localises to the host Golgi apparatus membrane. It is found in the host endoplasmic reticulum membrane. In terms of biological role, forms the spikes present at the surface of the virion together with Glycoprotein C. They are able to attach the virion to a cell receptor and to promote fusion of membranes after endocytosis of the virion. Plays a role in virus binding and/or entry into the vector midgut. Functionally, forms the spikes present at the surface of the virion together with Glycoprotein N. They are able to attach the virion to a cell receptor and to promote fusion of membranes after endocytosis of the virion. Probable class II fusion protein. This chain is Envelopment polyprotein (GP), found in Impatiens necrotic spot virus (INSV).